Consider the following 74-residue polypeptide: Cytochrome c oxidase subunit 2 (74 aa).

Topologically, residues 1-14 are mitochondrial intermembrane; the sequence is MAHPSQLGLQDAAS. The helical transmembrane segment at 15–45 threads the bilayer; sequence PVMEELLHFHDHALMIVFLISTLVLYIIVAM. Over 46–74 the chain is Mitochondrial matrix; sequence VSTKLTDKYTIDSQEIEIVWTVLPAVILI.

This sequence belongs to the cytochrome c oxidase subunit 2 family. As to quaternary structure, component of the cytochrome c oxidase (complex IV, CIV), a multisubunit enzyme composed of 14 subunits. The complex is composed of a catalytic core of 3 subunits MT-CO1, MT-CO2 and MT-CO3, encoded in the mitochondrial DNA, and 11 supernumerary subunits COX4I, COX5A, COX5B, COX6A, COX6B, COX6C, COX7A, COX7B, COX7C, COX8 and NDUFA4, which are encoded in the nuclear genome. The complex exists as a monomer or a dimer and forms supercomplexes (SCs) in the inner mitochondrial membrane with NADH-ubiquinone oxidoreductase (complex I, CI) and ubiquinol-cytochrome c oxidoreductase (cytochrome b-c1 complex, complex III, CIII), resulting in different assemblies (supercomplex SCI(1)III(2)IV(1) and megacomplex MCI(2)III(2)IV(2)). Found in a complex with TMEM177, COA6, COX18, COX20, SCO1 and SCO2. Interacts with TMEM177 in a COX20-dependent manner. Interacts with COX20. Interacts with COX16. Requires Cu cation as cofactor.

The protein localises to the mitochondrion inner membrane. It catalyses the reaction 4 Fe(II)-[cytochrome c] + O2 + 8 H(+)(in) = 4 Fe(III)-[cytochrome c] + 2 H2O + 4 H(+)(out). Functionally, component of the cytochrome c oxidase, the last enzyme in the mitochondrial electron transport chain which drives oxidative phosphorylation. The respiratory chain contains 3 multisubunit complexes succinate dehydrogenase (complex II, CII), ubiquinol-cytochrome c oxidoreductase (cytochrome b-c1 complex, complex III, CIII) and cytochrome c oxidase (complex IV, CIV), that cooperate to transfer electrons derived from NADH and succinate to molecular oxygen, creating an electrochemical gradient over the inner membrane that drives transmembrane transport and the ATP synthase. Cytochrome c oxidase is the component of the respiratory chain that catalyzes the reduction of oxygen to water. Electrons originating from reduced cytochrome c in the intermembrane space (IMS) are transferred via the dinuclear copper A center (CU(A)) of subunit 2 and heme A of subunit 1 to the active site in subunit 1, a binuclear center (BNC) formed by heme A3 and copper B (CU(B)). The BNC reduces molecular oxygen to 2 water molecules using 4 electrons from cytochrome c in the IMS and 4 protons from the mitochondrial matrix. This is Cytochrome c oxidase subunit 2 (mt-co2) from Megalops atlanticus (Tarpon).